A 337-amino-acid polypeptide reads, in one-letter code: Beta-hexosaminidase (337 aa).

Residues aspartate 62, arginine 70, arginine 133, and 163 to 164 (KH) each bind substrate. Residue histidine 176 is the Proton donor/acceptor of the active site. The active-site Nucleophile is the aspartate 248.

It belongs to the glycosyl hydrolase 3 family. NagZ subfamily.

It is found in the cytoplasm. The enzyme catalyses Hydrolysis of terminal non-reducing N-acetyl-D-hexosamine residues in N-acetyl-beta-D-hexosaminides.. Its pathway is cell wall biogenesis; peptidoglycan recycling. Functionally, plays a role in peptidoglycan recycling by cleaving the terminal beta-1,4-linked N-acetylglucosamine (GlcNAc) from peptide-linked peptidoglycan fragments, giving rise to free GlcNAc, anhydro-N-acetylmuramic acid and anhydro-N-acetylmuramic acid-linked peptides. This Psychromonas ingrahamii (strain DSM 17664 / CCUG 51855 / 37) protein is Beta-hexosaminidase.